A 109-amino-acid chain; its full sequence is Fluoride-specific ion channel FluC (109 aa).

A run of 3 helical transmembrane segments spans residues 21–41 (FFLN…GFVI), 52–72 (ILLT…LFLY), and 83–103 (LFFY…AGFL).

Belongs to the fluoride channel Fluc/FEX (TC 1.A.43) family.

It is found in the cell inner membrane. It carries out the reaction fluoride(in) = fluoride(out). Fluoride-specific ion channel. Important for reducing fluoride concentration in the cell, thus reducing its toxicity. The chain is Fluoride-specific ion channel FluC from Prochlorococcus marinus (strain MIT 9515).